A 601-amino-acid polypeptide reads, in one-letter code: Glutathione-regulated potassium-efflux system protein KefB (601 aa).

The next 13 helical transmembrane spans lie at 4-24, 29-49, 55-75, 87-107, 111-131, 152-172, 177-197, 207-227, 230-250, 262-282, 284-304, 324-344, and 356-376; these read ADLL…VPLA, IGAV…GLGF, EILH…GLEL, IFGV…GLLM, FLWQ…TAMA, VLLF…LLAG, HFDW…LIGG, FIAA…LVLS, LFMD…GVLL, AIDP…GMSL, LGVL…LVVI, MQFA…FSTA, and ALLL…MKGI. Residues 400–519 form the RCK N-terminal domain; that stretch reads KPQVIVVGFG…AGVTQFSRET (120 aa).

Belongs to the monovalent cation:proton antiporter 2 (CPA2) transporter (TC 2.A.37) family. KefB subfamily. Interacts with the regulatory subunit KefG.

The protein resides in the cell inner membrane. Its function is as follows. Pore-forming subunit of a potassium efflux system that confers protection against electrophiles. Catalyzes K(+)/H(+) antiport. The sequence is that of Glutathione-regulated potassium-efflux system protein KefB from Salmonella heidelberg (strain SL476).